We begin with the raw amino-acid sequence, 403 residues long: Vacuole membrane protein 1 homolog (403 aa).

Residues 7-33 (IVLSNEKDIQLRIQQLEERKEKRKNVK) are a coiled coil. A run of 8 helical transmembrane segments spans residues 65 to 85 (FLLF…YVPG), 102 to 122 (IWWV…LHTF), 150 to 170 (ANSF…WMIL), 175 to 195 (WAAL…YFVA), 240 to 260 (LIGN…NPLF), 263 to 283 (AGIT…ATFI), 294 to 314 (ACFV…SFIE), and 348 to 368 (VGLA…MSIV).

Belongs to the VMP1 family.

It localises to the membrane. Its subcellular location is the endoplasmic reticulum. It carries out the reaction a 1,2-diacyl-sn-glycero-3-phospho-L-serine(in) = a 1,2-diacyl-sn-glycero-3-phospho-L-serine(out). It catalyses the reaction cholesterol(in) = cholesterol(out). The enzyme catalyses a 1,2-diacyl-sn-glycero-3-phosphocholine(in) = a 1,2-diacyl-sn-glycero-3-phosphocholine(out). The catalysed reaction is a 1,2-diacyl-sn-glycero-3-phosphoethanolamine(in) = a 1,2-diacyl-sn-glycero-3-phosphoethanolamine(out). Its function is as follows. Phospholipid scramblase involved in lipid homeostasis and membrane dynamics processes. Required for autophagosome formation: participates in early stages of autophagosome biogenesis at the endoplasmic reticulum (ER) membrane by reequilibrating the leaflets of the ER as lipids are extracted. In addition to autophagy, involved in other processes in which phospholipid scramblase activity is required. This is Vacuole membrane protein 1 homolog from Dictyostelium discoideum (Social amoeba).